The primary structure comprises 190 residues: Crossover junction endodeoxyribonuclease RuvC (190 aa).

Residues aspartate 8, glutamate 67, and aspartate 139 contribute to the active site. Residues aspartate 8, glutamate 67, and aspartate 139 each contribute to the Mg(2+) site.

This sequence belongs to the RuvC family. Homodimer which binds Holliday junction (HJ) DNA. The HJ becomes 2-fold symmetrical on binding to RuvC with unstacked arms; it has a different conformation from HJ DNA in complex with RuvA. In the full resolvosome a probable DNA-RuvA(4)-RuvB(12)-RuvC(2) complex forms which resolves the HJ. Requires Mg(2+) as cofactor.

The protein localises to the cytoplasm. It carries out the reaction Endonucleolytic cleavage at a junction such as a reciprocal single-stranded crossover between two homologous DNA duplexes (Holliday junction).. Its function is as follows. The RuvA-RuvB-RuvC complex processes Holliday junction (HJ) DNA during genetic recombination and DNA repair. Endonuclease that resolves HJ intermediates. Cleaves cruciform DNA by making single-stranded nicks across the HJ at symmetrical positions within the homologous arms, yielding a 5'-phosphate and a 3'-hydroxyl group; requires a central core of homology in the junction. The consensus cleavage sequence is 5'-(A/T)TT(C/G)-3'. Cleavage occurs on the 3'-side of the TT dinucleotide at the point of strand exchange. HJ branch migration catalyzed by RuvA-RuvB allows RuvC to scan DNA until it finds its consensus sequence, where it cleaves and resolves the cruciform DNA. The sequence is that of Crossover junction endodeoxyribonuclease RuvC from Haemophilus influenzae (strain PittGG).